Here is a 331-residue protein sequence, read N- to C-terminus: Leucine-rich repeat-containing protein 26 (331 aa).

Residues 1 to 26 form the signal peptide; that stretch reads MRGSFFSRLPPQLSLLLLLSLRRVWT. At 27–261 the chain is on the extracellular side; the sequence is QEDIGTAPSK…QCTQSLAARD (235 aa). The region spanning 34–71 is the LRRNT domain; that stretch reads PSKSPVAPECPEACSCSLGGKANCSALALPAVPADLSW. 2 disulfides stabilise this stretch: Cys43–Cys49 and Cys47–Cys57. LRR repeat units follow at residues 72–93, 96–117, 120–141, 144–165, and 168–191; these read QVRS…AFAN, ALLY…AFWG, VLQW…TFAP, ALSF…ILGP, and LLRV…NNLP. Residues 201 to 255 enclose the LRRCT domain; that stretch reads NPWTCNCALRPLCTWLRKHPRPASETETLLCVSPRLQTLSLLTAFPDAAFKQCTQ. 2 disulfide bridges follow: Cys205/Cys231 and Cys207/Cys253. A helical membrane pass occupies residues 262–282; the sequence is LAVVYALGPVSFLASLAICLA. The Cytoplasmic portion of the chain corresponds to 283–331; the sequence is LGSVLTACGARRRRRRRTTVRHLLRRQLDPEGPPSLEDAGSPVTAAIQA. A disordered region spans residues 310–331; the sequence is LDPEGPPSLEDAGSPVTAAIQA.

As to quaternary structure, interacts with KCNMA1.

It localises to the cell membrane. The protein resides in the cytoplasm. It is found in the cytoskeleton. In terms of biological role, auxiliary protein of the large-conductance, voltage and calcium-activated potassium channel (BK alpha). Required for the conversion of BK alpha channels from a high-voltage to a low-voltage activated channel type in non-excitable cells. These are characterized by negative membrane voltages and constant low levels of calcium. This chain is Leucine-rich repeat-containing protein 26 (Lrrc26), found in Mus musculus (Mouse).